Reading from the N-terminus, the 335-residue chain is Calcium-binding protein TgpCaBP (335 aa).

A helical membrane pass occupies residues 30 to 50; that stretch reads LPLCVFSLFLFSFAFSALSGA. EF-hand domains follow at residues 113 to 148, 153 to 188, 190 to 225, and 227 to 262; these read MHQHQVRMEFQAIDKDNDGKVSLSELEATYVDSLDQ, QHKKEVEQRFKTVDKDNDGLLDLSEIRILMDPGKDE, LMKIEIEEILNAQDKNGDRKITVTEFIETEGTGSLN, and VEKTELEKEFKSYDLNADGAIDVEELQQIIKDPHSH. Residues Asp-126, Asp-128, Asp-130, Lys-132, Glu-137, Asp-166, Asp-168, Asp-170, Glu-177, Asp-203, Asn-205, Asp-207, Lys-209, Glu-214, Asp-240, Asn-242, Asp-244, and Glu-251 each contribute to the Ca(2+) site. Residues 332 to 335 carry the Prevents secretion from ER motif; that stretch reads HDEL.

It is found in the endoplasmic reticulum membrane. Its subcellular location is the cytoplasm. The protein localises to the cytosol. Functionally, calcium-binding protein. Participates in the efflux of intracellular Ca(2+) and storage of Ca(2+) in the endoplasmic reticulum. Required for gliding, host cell invasion and egress. Required for microneme secretion. This Toxoplasma gondii protein is Calcium-binding protein TgpCaBP.